We begin with the raw amino-acid sequence, 587 residues long: Hatching enzyme (587 aa).

The signal sequence occupies residues 1–18 (MANSGLILLVMFMIHVTT). A propeptide spans 19-166 (VHNVPLPSTA…PRCGVPDVLP (148 aa)) (activation peptide). 3 N-linked (GlcNAc...) asparagine glycosylation sites follow: asparagine 64, asparagine 126, and asparagine 141. The Cysteine switch motif lies at 157-164 (PRCGVPDV). Residues cysteine 159 and histidine 283 each contribute to the Zn(2+) site. Glutamate 284 is an active-site residue. Zn(2+) contacts are provided by histidine 287 and histidine 293. A disordered region spans residues 325-382 (LYGSNSGSGTTTTTRRPTTTRATTTRRTTTTRATTTRATTTTTTSPSRPSPPRRACSG). Residues 334–371 (TTTTTRRPTTTRATTTRRTTTTRATTTRATTTTTTSPS) are compositionally biased toward low complexity. Cysteine 380 and cysteine 582 form a disulfide bridge. 4 Hemopexin repeats span residues 381–422 (SGSF…RFGF), 425–468 (PQNI…WVGL), 469–513 (PCNI…FNDV), and 518–570 (HDGV…IPQC). Asparagine 584 carries an N-linked (GlcNAc...) asparagine glycan.

This sequence belongs to the peptidase M10A family. The cofactor is Zn(2+).

It carries out the reaction Hydrolysis of proteins of the fertilization envelope and dimethylcasein.. In terms of biological role, allows the sea urchin to digest the protective envelope derived from the egg extracellular matrix; thus allowing the sea urchin to swim freely. The sequence is that of Hatching enzyme from Paracentrotus lividus (Common sea urchin).